We begin with the raw amino-acid sequence, 401 residues long: Phosrestin-1 (401 aa).

Belongs to the arrestin family. In terms of tissue distribution, inner and outer segments, and the inner plexiform regions of the retina.

Undergoes light-induced phosphorylation, probably plays an important role in the photoreceptor transduction. This chain is Phosrestin-1 (Arr2), found in Drosophila miranda (Fruit fly).